We begin with the raw amino-acid sequence, 240 residues long: Cysteine-rich venom protein (240 aa).

The signal sequence occupies residues 1–19; sequence MIAFIVLPILAAVLHQSSG. The region spanning 39–166 is the SCP domain; it reads DLHNSLRRSV…KYRYFYVCQY (128 aa). Cystine bridges form between Cys-75-Cys-153, Cys-92-Cys-167, Cys-148-Cys-164, Cys-186-Cys-193, Cys-189-Cys-198, Cys-202-Cys-235, Cys-211-Cys-229, and Cys-220-Cys-233. The ShKT domain occupies 202 to 235; that stretch reads CTQENTYSNCNSLVQQSSCQDNNMKTKCPASCFC.

Belongs to the CRISP family. As to expression, expressed by the venom gland.

It is found in the secreted. May block ryanodine receptors (RYR). In Protobothrops mucrosquamatus (Taiwan habu), this protein is Cysteine-rich venom protein.